A 450-amino-acid polypeptide reads, in one-letter code: uncharacterized protein (450 aa).

The segment covering 141–151 (WLDKTDGEKNS) has biased composition (basic and acidic residues). Disordered regions lie at residues 141 to 171 (WLDK…DSAG), 276 to 298 (LQDS…AVSQ), and 395 to 416 (DDED…LSRN). Residues 152–171 (EASSTDNSLENSTKGADSAG) show a composition bias toward polar residues. The segment covering 283–298 (QGDKGEKESKDDAVSQ) has biased composition (basic and acidic residues). Over residues 395–411 (DDEDEDNVDNSEGDEES) the composition is skewed to acidic residues.

This is an uncharacterized protein from Saccharomyces cerevisiae (strain ATCC 204508 / S288c) (Baker's yeast).